A 182-amino-acid chain; its full sequence is Inorganic pyrophosphatase (182 aa).

Substrate is bound by residues lysine 30, arginine 44, and tyrosine 56. Positions 66, 71, and 103 each coordinate Mg(2+). Tyrosine 142 contacts substrate.

Belongs to the PPase family. Homohexamer. The cofactor is Mg(2+).

It is found in the cytoplasm. The catalysed reaction is diphosphate + H2O = 2 phosphate + H(+). Catalyzes the hydrolysis of inorganic pyrophosphate (PPi) forming two phosphate ions. This is Inorganic pyrophosphatase from Buchnera aphidicola subsp. Acyrthosiphon pisum (strain APS) (Acyrthosiphon pisum symbiotic bacterium).